A 199-amino-acid polypeptide reads, in one-letter code: uncharacterized protein (199 aa).

3 helical membrane passes run 27 to 47 (LIKI…PILA), 55 to 75 (LLTL…VAAL), and 172 to 192 (LLLL…VLLL).

The protein resides in the cell membrane. This is an uncharacterized protein from Synechocystis sp. (strain ATCC 27184 / PCC 6803 / Kazusa).